A 585-amino-acid polypeptide reads, in one-letter code: Glutamate decarboxylase 2 (585 aa).

Residues 1–24 (MASPGSGFWSFGSEDGSADPENPG) form a disordered region. Ser-3, Ser-6, Ser-10, and Ser-13 each carry phosphoserine. S-palmitoyl cysteine attachment occurs at residues Cys-30 and Cys-45. 181 to 183 (QLS) contacts substrate. Lys-396 carries the N6-(pyridoxal phosphate)lysine modification. Arg-558 is a substrate binding site.

The protein belongs to the group II decarboxylase family. Homodimer. Pyridoxal 5'-phosphate serves as cofactor. In terms of processing, phosphorylated; which does not affect kinetic parameters or subcellular location. Palmitoylated; which is required for presynaptic clustering.

It is found in the cytoplasm. It localises to the cytosol. Its subcellular location is the cytoplasmic vesicle. The protein localises to the presynaptic cell membrane. The protein resides in the golgi apparatus membrane. It carries out the reaction L-glutamate + H(+) = 4-aminobutanoate + CO2. Functionally, catalyzes the production of GABA. The polypeptide is Glutamate decarboxylase 2 (Gad2) (Mus musculus (Mouse)).